The sequence spans 678 residues: GAS2-like protein 1 (678 aa).

Residue alanine 2 is modified to N-acetylalanine. The region spanning 27-148 (EAMKEDLADW…CLLEVARRGA (122 aa)) is the Calponin-homology (CH) domain. The 73-residue stretch at 203–275 (NDLRNLDELV…HYLDKHDPCR (73 aa)) folds into the GAR domain. Residues 276–291 (CSSSTHRLPQQRTGTF) are compositionally biased toward polar residues. Disordered stretches follow at residues 276-524 (CSSS…FRRL) and 538-678 (AASH…DSSM). Serine 306 and serine 316 each carry phosphoserine. A compositionally biased stretch (basic and acidic residues) spans 327–340 (GTKEGPETPLRPRD). The residue at position 334 (threonine 334) is a Phosphothreonine. Serine 352 and serine 355 each carry phosphoserine. The segment covering 354 to 365 (DSDSSASSAQSG) has biased composition (low complexity). Basic and acidic residues predominate over residues 370 to 381 (RSDDSATGSRRE). Over residues 392 to 403 (PASPRRPTAPRS) the composition is skewed to low complexity. Serine 394 carries the post-translational modification Phosphoserine. Residues 404–413 (QSRDRLDRGR) are compositionally biased toward basic and acidic residues. Residues serine 436 and serine 438 each carry the phosphoserine modification. Residues 437–454 (QSREEQAVLMVRRDRDGQ) show a composition bias toward basic and acidic residues. Residues 461 to 471 (GRGGGGSGGSG) are compositionally biased toward gly residues. Residues serine 482 and serine 489 each carry the phosphoserine modification. Residues 485–495 (APRPSRGPSPG) are compositionally biased toward pro residues. The residue at position 490 (arginine 490) is an Omega-N-methylarginine. The residue at position 493 (serine 493) is a Phosphoserine. Threonine 501 is modified (phosphothreonine). Position 507 is an omega-N-methylarginine (arginine 507). Low complexity-rich tracts occupy residues 509–519 (PLQLDPQQEQQ) and 554–568 (DSAY…SSLS). Position 630 is an omega-N-methylarginine (arginine 630). Basic and acidic residues predominate over residues 631-641 (GRMDTQPDRKP). Serine 654 carries the post-translational modification Phosphoserine. The segment covering 666-678 (HSVTPRTEPDSSM) has biased composition (polar residues).

The protein belongs to the GAS2 family. Interacts with MAPRE1.

The protein localises to the cytoplasm. It localises to the cytoskeleton. It is found in the stress fiber. Seems to be involved in the cross-linking of microtubules and microfilaments. Regulates microtubule dynamics and stability by interacting with microtubule plus-end tracking proteins, such as MAPRE1, to regulate microtubule growth along actin stress fibers. This is GAS2-like protein 1 (Gas2l1) from Mus musculus (Mouse).